Consider the following 154-residue polypeptide: Transcriptional repressor NrdR (154 aa).

The segment at 3-34 is a zinc-finger region; the sequence is CPFCGANDTKVIDSRLVAEGEQVRRRRECVAC. Positions 49–139 constitute an ATP-cone domain; sequence PRLIKQDGTR…VYRRFQDLDE (91 aa).

This sequence belongs to the NrdR family. The cofactor is Zn(2+).

In terms of biological role, negatively regulates transcription of bacterial ribonucleotide reductase nrd genes and operons by binding to NrdR-boxes. The chain is Transcriptional repressor NrdR from Pseudomonas putida (strain W619).